Consider the following 243-residue polypeptide: Segregation and condensation protein A (243 aa).

The protein belongs to the ScpA family. Component of a cohesin-like complex composed of ScpA, ScpB and the Smc homodimer, in which ScpA and ScpB bind to the head domain of Smc. The presence of the three proteins is required for the association of the complex with DNA.

The protein resides in the cytoplasm. Participates in chromosomal partition during cell division. May act via the formation of a condensin-like complex containing Smc and ScpB that pull DNA away from mid-cell into both cell halves. The sequence is that of Segregation and condensation protein A from Staphylococcus epidermidis (strain ATCC 35984 / DSM 28319 / BCRC 17069 / CCUG 31568 / BM 3577 / RP62A).